The sequence spans 276 residues: NH(3)-dependent NAD(+) synthetase (276 aa).

46 to 53 (GISGGQDS) lines the ATP pocket. Asp-52 is a binding site for Mg(2+). Arg-140 lines the deamido-NAD(+) pocket. An ATP-binding site is contributed by Thr-160. Glu-165 contacts Mg(2+). Deamido-NAD(+)-binding residues include Lys-173 and Asp-180. ATP-binding residues include Lys-189 and Thr-211. 260–261 (HK) serves as a coordination point for deamido-NAD(+).

This sequence belongs to the NAD synthetase family. As to quaternary structure, homodimer.

It catalyses the reaction deamido-NAD(+) + NH4(+) + ATP = AMP + diphosphate + NAD(+) + H(+). It participates in cofactor biosynthesis; NAD(+) biosynthesis; NAD(+) from deamido-NAD(+) (ammonia route): step 1/1. In terms of biological role, catalyzes the ATP-dependent amidation of deamido-NAD to form NAD. Uses ammonia as a nitrogen source. The chain is NH(3)-dependent NAD(+) synthetase from Citrobacter koseri (strain ATCC BAA-895 / CDC 4225-83 / SGSC4696).